Reading from the N-terminus, the 503-residue chain is Glycerol kinase (503 aa).

Residue Thr17 participates in ADP binding. Residues Thr17, Thr18, and Ser19 each contribute to the ATP site. Sn-glycerol 3-phosphate is bound at residue Thr17. Residue Arg21 participates in ADP binding. 4 residues coordinate sn-glycerol 3-phosphate: Arg87, Glu88, Tyr141, and Asp245. 5 residues coordinate glycerol: Arg87, Glu88, Tyr141, Asp245, and Gln246. Positions 267 and 310 each coordinate ADP. Positions 267, 310, 314, and 411 each coordinate ATP. The ADP site is built by Gly411 and Asn415.

Belongs to the FGGY kinase family.

It catalyses the reaction glycerol + ATP = sn-glycerol 3-phosphate + ADP + H(+). Its pathway is polyol metabolism; glycerol degradation via glycerol kinase pathway; sn-glycerol 3-phosphate from glycerol: step 1/1. Inhibited by fructose 1,6-bisphosphate (FBP). Key enzyme in the regulation of glycerol uptake and metabolism. Catalyzes the phosphorylation of glycerol to yield sn-glycerol 3-phosphate. In Pseudomonas tolaasii, this protein is Glycerol kinase.